The sequence spans 207 residues: Peptidyl-tRNA hydrolase (207 aa).

A tRNA-binding site is contributed by Y14. H19 acts as the Proton acceptor in catalysis. 3 residues coordinate tRNA: F68, N70, and N116.

This sequence belongs to the PTH family. In terms of assembly, monomer.

Its subcellular location is the cytoplasm. The enzyme catalyses an N-acyl-L-alpha-aminoacyl-tRNA + H2O = an N-acyl-L-amino acid + a tRNA + H(+). Functionally, hydrolyzes ribosome-free peptidyl-tRNAs (with 1 or more amino acids incorporated), which drop off the ribosome during protein synthesis, or as a result of ribosome stalling. Catalyzes the release of premature peptidyl moieties from peptidyl-tRNA molecules trapped in stalled 50S ribosomal subunits, and thus maintains levels of free tRNAs and 50S ribosomes. The protein is Peptidyl-tRNA hydrolase of Hyphomonas neptunium (strain ATCC 15444).